An 86-amino-acid chain; its full sequence is Large ribosomal subunit protein bL27 (86 aa).

Positions 1–24 (MATKKAGGSSRNGRDSAGRRLGVK) are disordered.

This sequence belongs to the bacterial ribosomal protein bL27 family.

The polypeptide is Large ribosomal subunit protein bL27 (Rickettsia conorii (strain ATCC VR-613 / Malish 7)).